The chain runs to 551 residues: TRAF3-interacting JNK-activating modulator (551 aa).

Residues 1-526 (MISPDPRPSP…QLPPRRQCGR (526 aa)) lie on the Cytoplasmic side of the membrane. 2 disordered regions span residues 73-95 (LEEK…RPGQ) and 140-178 (DHLS…IKND). Coiled coils occupy residues 240 to 436 (DKLK…LLTK) and 464 to 506 (WDLR…RKLQ). The chain crosses the membrane as a helical; Anchor for type IV membrane protein span at residues 527-544 (WLPVLMVVIAAALAVFLA). Residues 545 to 551 (NKDNLMI) are Extracellular-facing.

As to quaternary structure, interacts (via its coiled-coil domain) with TRAF3 (via isoleucine zipper). Interacts with MAP2K1. Interacts with PPP2CA; this interaction targets PPP2CA to the lysosomes. Interacts with TLR4. Interacts with MAVS. Interacts with TBK1.

The protein localises to the cell membrane. The protein resides in the golgi apparatus membrane. Its subcellular location is the lysosome membrane. It localises to the mitochondrion outer membrane. In terms of biological role, adapter protein that plays essential roles in both innate and adaptive immunity. Plays a crucial role in the regulation of thymocyte development. Mechanistically, mediates TCR-stimulated activation through recruiting MAP2K1/MEK1 to the Golgi and, thereby, facilitating the interaction of MAP2K1/MEK1 with its activator BRAF. Also plays an essential role in regulatory T-cell stability and function by recruiting the serine-threonine phosphatase catalytic subunit (PPP2CA) to the lysosome, thereby facilitating the interaction of PP2Ac with the mTORC1 component RPTOR and restricting glycolytic metabolism. Positively regulates TLR4 signaling activity in macrophage-mediated inflammation by acting as a molecular clamp to facilitate LPS-induced translocation of TLR4 to lipid rafts. In response to viral infection, facilitates the recruitment of TRAF3 to MAVS within mitochondria leading to IRF3 activation and interferon production. However, participates in the maintenance of immune homeostasis and the prevention of overzealous innate immunity by promoting 'Lys-48'-dependent ubiquitination of TBK1. This chain is TRAF3-interacting JNK-activating modulator (TRAF3IP3), found in Homo sapiens (Human).